A 93-amino-acid chain; its full sequence is Large ribosomal subunit protein uL23cz/uL23cy (93 aa).

The protein belongs to the universal ribosomal protein uL23 family. Part of the 50S ribosomal subunit.

Its subcellular location is the plastid. The protein resides in the chloroplast. In terms of biological role, binds to 23S rRNA. This Gossypium barbadense (Sea Island cotton) protein is Large ribosomal subunit protein uL23cz/uL23cy (rpl23-A).